A 48-amino-acid chain; its full sequence is uncharacterized protein (48 aa).

This is an uncharacterized protein from Treponema pallidum (strain Nichols).